Here is a 148-residue protein sequence, read N- to C-terminus: UPF0208 membrane protein HD_1715 (148 aa).

2 consecutive transmembrane segments (helical) span residues A41–T60 and I66–L88.

Belongs to the UPF0208 family.

Its subcellular location is the cell inner membrane. This is UPF0208 membrane protein HD_1715 from Haemophilus ducreyi (strain 35000HP / ATCC 700724).